Reading from the N-terminus, the 292-residue chain is NAD kinase (292 aa).

The Proton acceptor role is filled by aspartate 73. NAD(+) contacts are provided by residues 73-74, 147-148, histidine 158, arginine 175, aspartate 177, 188-193, and glutamine 247; these read DG, NE, and TAYSLS.

Belongs to the NAD kinase family. A divalent metal cation serves as cofactor.

It is found in the cytoplasm. The enzyme catalyses NAD(+) + ATP = ADP + NADP(+) + H(+). Functionally, involved in the regulation of the intracellular balance of NAD and NADP, and is a key enzyme in the biosynthesis of NADP. Catalyzes specifically the phosphorylation on 2'-hydroxyl of the adenosine moiety of NAD to yield NADP. This is NAD kinase from Erwinia tasmaniensis (strain DSM 17950 / CFBP 7177 / CIP 109463 / NCPPB 4357 / Et1/99).